The following is a 506-amino-acid chain: Hexokinase-6 (506 aa).

The chain crosses the membrane as a helical span at residues V6–V26. Positions R43–A497 constitute a Hexokinase domain. The interval T98–V236 is hexokinase small subdomain. G112, T113, and N114 together coordinate ADP. T202, K203, N237, and D238 together coordinate D-glucose. The segment at N237–D486 is hexokinase large subdomain. ADP is bound at residue T261. D-glucose is bound by residues N264, E292, and E323. Residue G451 participates in ADP binding.

Belongs to the hexokinase family. In terms of tissue distribution, expressed in roots, leaves, flowers, immature seeds and endosperm.

Its subcellular location is the plastid. It localises to the chloroplast outer membrane. The enzyme catalyses a D-hexose + ATP = a D-hexose 6-phosphate + ADP + H(+). It catalyses the reaction D-fructose + ATP = D-fructose 6-phosphate + ADP + H(+). It carries out the reaction D-glucose + ATP = D-glucose 6-phosphate + ADP + H(+). Its pathway is carbohydrate metabolism; hexose metabolism. The protein operates within carbohydrate degradation; glycolysis; D-glyceraldehyde 3-phosphate and glycerone phosphate from D-glucose: step 1/4. Functionally, fructose and glucose phosphorylating enzyme. Functions as a glucose sensor for plant growth and photosynthesis. This Oryza sativa subsp. japonica (Rice) protein is Hexokinase-6 (HXK6).